The primary structure comprises 189 residues: H/ACA ribonucleoprotein complex subunit 1-like protein 2 (189 aa).

A compositionally biased stretch (gly residues) spans 1–12 (MRPPRGGGSFRG). Disordered stretches follow at residues 1–39 (MRPPRGGGSFRGRGGRDNGGRGRGRGRGRGRFGGGNYDE) and 129–189 (RFLP…RGRA). A compositionally biased stretch (low complexity) spans 162–177 (GRGAPRGASRGFQPRG).

The protein belongs to the GAR1 family. Component of the small nucleolar ribonucleoprotein particle containing H/ACA-type snoRNAs (H/ACA snoRNPs).

Its subcellular location is the nucleus. It is found in the nucleolus. Functionally, required for ribosome biogenesis. Part of a complex which catalyzes pseudouridylation of rRNA. This involves the isomerization of uridine such that the ribose is subsequently attached to C5, instead of the normal N1. Pseudouridine ('psi') residues may serve to stabilize the conformation of rRNAs. The chain is H/ACA ribonucleoprotein complex subunit 1-like protein 2 from Arabidopsis thaliana (Mouse-ear cress).